Reading from the N-terminus, the 209-residue chain is High frequency lysogenization protein HflD homolog (209 aa).

This sequence belongs to the HflD family.

It is found in the cytoplasm. Its subcellular location is the cell inner membrane. In Marinomonas sp. (strain MWYL1), this protein is High frequency lysogenization protein HflD homolog.